Here is a 329-residue protein sequence, read N- to C-terminus: GTPase Obg (329 aa).

The Obg domain maps to 1–159; sequence MQFIDQAIID…WSLQLELKLL (159 aa). The OBG-type G domain occupies 160 to 328; that stretch reads AEVGIIGLPN…LLSSIWNELG (169 aa). ATP contacts are provided by residues 166–173, 191–195, 213–216, 280–283, and 309–311; these read GLPNAGKS, FTTLI, DIPG, NKKE, and SAV. Residues Ser173 and Thr193 each coordinate Mg(2+).

Belongs to the TRAFAC class OBG-HflX-like GTPase superfamily. OBG GTPase family. In terms of assembly, monomer. The cofactor is Mg(2+).

Its subcellular location is the cytoplasm. Functionally, an essential GTPase which binds GTP, GDP and possibly (p)ppGpp with moderate affinity, with high nucleotide exchange rates and a fairly low GTP hydrolysis rate. Plays a role in control of the cell cycle, stress response, ribosome biogenesis and in those bacteria that undergo differentiation, in morphogenesis control. The sequence is that of GTPase Obg from Prochlorococcus marinus (strain NATL2A).